A 415-amino-acid chain; its full sequence is Zona pellucida-like domain-containing protein 1 (415 aa).

Positions 1–19 are cleaved as a signal peptide; sequence MEQIRLLLLLTIRVLSGSA. At 20–372 the chain is on the extracellular side; that stretch reads QFNGYNCDAN…PPFQLNAITS (353 aa). The ZP domain maps to 43–320; it reads YCGVQAITMK…PICSHRERRD (278 aa). 2 cysteine pairs are disulfide-bonded: Cys-44–Cys-155 and Cys-79–Cys-104. A glycan (N-linked (GlcNAc...) asparagine) is linked at Asn-164. 2 disulfides stabilise this stretch: Cys-235-Cys-296 and Cys-255-Cys-313. The interval 323 to 359 is disordered; it reads RRTTWSSQSSSGSAVLSAGPIITRSDETPTNNSQLGS. A compositionally biased stretch (low complexity) spans 328–339; the sequence is SSQSSSGSAVLS. Residues 350–359 are compositionally biased toward polar residues; that stretch reads TPTNNSQLGS. Residues 373–393 form a helical membrane-spanning segment; the sequence is ALISGMVILGVMSFSLLVCPL. The Cytoplasmic segment spans residues 394–415; that stretch reads ALLHRKGPTSLVLNGIRNPVFD.

Proteolytically cleaved before the transmembrane segment to yield the secreted form found in the extracellular matrix of the cupula.

Its subcellular location is the cytoplasmic vesicle membrane. It localises to the secreted. It is found in the extracellular space. The protein resides in the extracellular matrix. Glycoprotein which is a component of the gelatinous extracellular matrix in the cupulae of the vestibular organ. The protein is Zona pellucida-like domain-containing protein 1 (ZPLD1) of Macaca fascicularis (Crab-eating macaque).